Here is a 640-residue protein sequence, read N- to C-terminus: Protein cereblon (640 aa).

Residues 1–11 are compositionally biased toward acidic residues; it reads MDDEETAEIDE. 2 disordered regions span residues 1 to 25 and 92 to 159; these read MDDEETAEIDETNSAAADMQVELGP and REDP…EAVP. Residues 113 to 137 are compositionally biased toward low complexity; that stretch reads QPAQQEEQASLPYDSPSRASISSRH. The Lon N-terminal domain occupies 278–506; the sequence is RMLIFMHQHI…IIDTTLKQES (229 aa). The CULT domain maps to 505–614; it reads ESLFYCRYCN…LAGSSVRIGK (110 aa). Positions 510, 513, 579, and 582 each coordinate Zn(2+).

It belongs to the CRBN family. Likely a component of a DCX (DDB1-CUL4-X-box) protein ligase complex. May interact with pic/DDB1. Ubiquitinated.

Its subcellular location is the nucleus. It participates in protein modification; protein ubiquitination. Functionally, substrate recognition component of a DCX (DDB1-CUL4-X-box) E3 protein ligase complex that mediates the ubiquitination and subsequent proteasomal degradation of target proteins. Has an essential role in mediating growth by negatively regulating insulin signaling. It also has a role in maintaining presynaptic function in the neuromuscular junction synapses of third-instar larvae. The polypeptide is Protein cereblon (Drosophila virilis (Fruit fly)).